The sequence spans 393 residues: Dual specificity mitogen-activated protein kinase kinase 1 (393 aa).

The tract at residues 1–27 is disordered; that stretch reads MPKKKPTPIQLNPAPDGSAVNGTSSAE. The Protein kinase domain maps to 68 to 361; the sequence is FEKISELGAG…LKQLMVHAFI (294 aa). ATP contacts are provided by residues 74–82 and lysine 97; that span reads LGAGNGGVV. Aspartate 190 (proton acceptor) is an active-site residue. Residues serine 218 and serine 222 each carry the phosphoserine; by RAF modification. The tract at residues 270-307 is RAF1-binding; the sequence is ELELLFGCQVEGDAAETPPRPRTPGRPLSSYGMDSRPP. At threonine 286 the chain carries Phosphothreonine. Threonine 292 carries the phosphothreonine; by MAPK1 modification. Phosphoserine; by PAK is present on serine 298.

It belongs to the protein kinase superfamily. STE Ser/Thr protein kinase family. MAP kinase kinase subfamily. In terms of assembly, found in a complex with at least BRAF, HRAS, MAP2K1, MAPK3/ERK1 and RGS14. Forms a heterodimer with MAP2K2/MEK2. Forms heterodimers with KSR2 which further dimerize to form tetramers. Interacts with KSR1 or KSR2 and BRAF; the interaction with KSR1 or KSR2 mediates KSR1-BRAF or KSR2-BRAF dimerization. Interacts with ARBB2, LAMTOR3, MAPK1/ERK2 and RAF1. Interacts with MAPK1/ERK2. Interacts with MORG1. Interacts with PPARG. Interacts with VRK2. Interacts with SGK1. Interacts with BIRC6/bruce. Interacts with KAT7; the interaction promotes KAT7 phosphorylation. Interacts with RAF1 and NEK10; the interaction is required for ERK1/2-signaling pathway activation in response to UV irradiation. Interacts with TRAF3IP3. Interacts with MOS. In terms of processing, phosphorylation at Ser-218 and Ser-222 by MAP kinase kinase kinases (BRAF or MEKK1) positively regulates kinase activity. Also phosphorylated at Thr-292 by MAPK1/ERK2 and at Ser-298 by PAK. MAPK1/ERK2 phosphorylation of Thr-292 occurs in response to cellular adhesion and leads to inhibition of Ser-298 phosphorylation by PAK. Autophosphorylated at Ser-218 and Ser-222, autophosphosphorylation is promoted by NEK10 following UV irradiation.

The protein localises to the cytoplasm. It localises to the cytoskeleton. Its subcellular location is the microtubule organizing center. The protein resides in the centrosome. It is found in the spindle pole body. The protein localises to the nucleus. It localises to the membrane. The enzyme catalyses L-seryl-[protein] + ATP = O-phospho-L-seryl-[protein] + ADP + H(+). It catalyses the reaction L-threonyl-[protein] + ATP = O-phospho-L-threonyl-[protein] + ADP + H(+). The catalysed reaction is L-tyrosyl-[protein] + ATP = O-phospho-L-tyrosyl-[protein] + ADP + H(+). With respect to regulation, ras proteins such as HRAS mediate the activation of RAF proteins such as RAF1 or BRAF which in turn activate extracellular signal-regulated kinases (ERK) through MAPK (mitogen-activated protein kinases) and ERK kinases MAP2K1/MEK1 and MAP2K2/MEK2. Activation occurs through phosphorylation of Ser-218 and Ser-222. MAP2K1/MEK1 binds KSR1 or KSR2 releasing the inhibitory intramolecular interaction between KSR1 or KSR2 protein kinase and N-terminal domains. This allows KSR1 or KSR2 dimerization with BRAF leading to BRAF activation and phosphorylation of MAP2K1. MAP2K1/MEK1 is also the target of negative feed-back regulation by its substrate kinases, such as MAPK1/ERK2. These phosphorylate MAP2K1/MEK1 on Thr-292, thereby facilitating dephosphorylation of the activating residues Ser-218 and Ser-222. Inhibited by serine/threonine phosphatase 2A. In terms of biological role, dual specificity protein kinase which acts as an essential component of the MAP kinase signal transduction pathway. Binding of extracellular ligands such as growth factors, cytokines and hormones to their cell-surface receptors activates RAS and this initiates RAF1 activation. RAF1 then further activates the dual-specificity protein kinases MAP2K1/MEK1 and MAP2K2/MEK2. Both MAP2K1/MEK1 and MAP2K2/MEK2 function specifically in the MAPK/ERK cascade, and catalyze the concomitant phosphorylation of a threonine and a tyrosine residue in a Thr-Glu-Tyr sequence located in the extracellular signal-regulated kinases MAPK3/ERK1 and MAPK1/ERK2, leading to their activation and further transduction of the signal within the MAPK/ERK cascade. Activates BRAF in a KSR1 or KSR2-dependent manner; by binding to KSR1 or KSR2 releases the inhibitory intramolecular interaction between KSR1 or KSR2 protein kinase and N-terminal domains which promotes KSR1 or KSR2-BRAF dimerization and BRAF activation. Depending on the cellular context, this pathway mediates diverse biological functions such as cell growth, adhesion, survival and differentiation, predominantly through the regulation of transcription, metabolism and cytoskeletal rearrangements. One target of the MAPK/ERK cascade is peroxisome proliferator-activated receptor gamma (PPARG), a nuclear receptor that promotes differentiation and apoptosis. MAP2K1/MEK1 has been shown to export PPARG from the nucleus. The MAPK/ERK cascade is also involved in the regulation of endosomal dynamics, including lysosome processing and endosome cycling through the perinuclear recycling compartment (PNRC), as well as in the fragmentation of the Golgi apparatus during mitosis. The polypeptide is Dual specificity mitogen-activated protein kinase kinase 1 (Rattus norvegicus (Rat)).